The following is an 832-amino-acid chain: Protein wech (832 aa).

Positions 1 to 14 are enriched in polar residues; the sequence is MMELLSNNSVPQQM. A disordered region spans residues 1–42; that stretch reads MMELLSNNSVPQQMASSNAPSANNVAHSSTANGSGGGSVSSN. Over residues 15-32 the composition is skewed to low complexity; that stretch reads ASSNAPSANNVAHSSTAN. Serine 107 carries the post-translational modification Phosphoserine. 2 B box-type zinc fingers span residues 118 to 163 and 184 to 224; these read NSSI…IVSL and SGNF…YASI. Residues cysteine 123, cysteine 126, cysteine 145, histidine 149, cysteine 189, histidine 192, cysteine 211, and histidine 216 each contribute to the Zn(2+) site. Serine 470, serine 475, and serine 506 each carry phosphoserine. NHL repeat units lie at residues 537-580, 584-627, 631-674, 680-722, and 727-770; these read SLSF…FNPD, KFKF…FTAS, LLKF…FDSE, QIVF…IDPD, and LSVK…FNQN.

Interacts with the head domain of rhea and the kinase domain of Ilk. Interacts with AGO1. Interacts with mei-P26. Expressed in ovarian germline stem cells (at protein level). Expressed ubiquitously in all epithelial cells during early stages of embryogenesis. Specifically expressed at epidermal muscle attachment site.

Vital for larval development. Plays a role in tumor formation. A crucial component for the physical link between integrins and the cytoskeleton in the epidermal muscle attachment sites. The chain is Protein wech (wech) from Drosophila melanogaster (Fruit fly).